We begin with the raw amino-acid sequence, 116 residues long: Putative RNase MJ0125 (116 aa).

Catalysis depends on residues Arg-76 and His-81. The short motif at 76–83 (RDKLIHQY) is the RX(4)HXY motif element. Tyr-83 carries the O-di-AMP-tyrosine modification.

This sequence belongs to the HepT RNase toxin family. In terms of assembly, homodimer, probably forms a complex with cognate antitoxin MJ0126. Modified by cognate antitoxin MJ0126; probably at least 2 successive AMPylation events occur on Tyr-83.

In terms of biological role, probable toxic component of a putative type VII toxin-antitoxin (TA) system, probably an RNase. Probably neutralized by cognate antitoxin MJ0126. Neutralization may be due to AMPylation by MJ0126. The sequence is that of Putative RNase MJ0125 from Methanocaldococcus jannaschii (strain ATCC 43067 / DSM 2661 / JAL-1 / JCM 10045 / NBRC 100440) (Methanococcus jannaschii).